A 430-amino-acid chain; its full sequence is Purine nucleoside phosphorylase LACC1 (430 aa).

Lys247 bears the N6-acetyllysine mark. Residues His250, Cys284, and His301 each contribute to the Zn(2+) site.

Belongs to the purine nucleoside phosphorylase YfiH/LACC1 family. Interacts with FASN. Interacts with SDHA. Interacts with ATF6, EIF2AK3 and ERN1. Phosphorylated on tyrosine residues. In terms of tissue distribution, ubiquitously expressed, with higher expression levels in immune-related tissues such as lymph nodes and spleen. Expressed in both intestinal and peripheral myeloid-derived cells.

The protein localises to the cytoplasm. The protein resides in the nucleus. It localises to the endoplasmic reticulum. Its subcellular location is the peroxisome. The catalysed reaction is adenosine + phosphate = alpha-D-ribose 1-phosphate + adenine. It carries out the reaction inosine + phosphate = alpha-D-ribose 1-phosphate + hypoxanthine. The enzyme catalyses guanosine + phosphate = alpha-D-ribose 1-phosphate + guanine. It catalyses the reaction S-methyl-5'-thioadenosine + phosphate = 5-(methylsulfanyl)-alpha-D-ribose 1-phosphate + adenine. The catalysed reaction is adenosine + H2O + H(+) = inosine + NH4(+). Purine nucleoside enzyme that catalyzes the phosphorolysis of adenosine, guanosine and inosine nucleosides, yielding D-ribose 1-phosphate and the respective free bases, adenine, guanine and hypoxanthine. Also catalyzes the phosphorolysis of S-methyl-5'-thioadenosine into adenine and S-methyl-5-thio-alpha-D-ribose 1-phosphate. Also has adenosine deaminase activity. Acts as a regulator of innate immunity in macrophages by modulating the purine nucleotide metabolism, thereby regulating the metabolic function and bioenergetic state of macrophages. Enables a purine nucleotide cycle between adenosine and inosine monophosphate and adenylosuccinate that prevents cytoplasmic acidification and balances the cytoplasmic-mitochondrial redox interface. The purine nucleotide cycle consumes aspartate and releases fumarate in a manner involving fatty acid oxidation and ATP-citrate lyase activity. Participates in pattern recognition receptor (PRR)-induced cytokines in macrophages: associates with the NOD2-signaling complex and promotes optimal NOD2-induced signaling, cytokine secretion and bacterial clearance. Localizes to the endoplasmic reticulum upon PRR stimulation of macrophages and associates with endoplasmic reticulum-stress sensors, promoting the endoplasmic reticulum unfolded protein response (UPR). Does not show laccase activity. This is Purine nucleoside phosphorylase LACC1 from Homo sapiens (Human).